The following is a 120-amino-acid chain: Cell cycle protein GpsB (120 aa).

Positions 34–74 form a coiled coil; that stretch reads LDDVIKDYDTYNKELERLNDENERLRAKVDELNRQVEVGSS. The disordered stretch occupies residues 69–90; the sequence is VEVGSSMSNQTASRQPVSSATN. The segment covering 71–90 has biased composition (polar residues); sequence VGSSMSNQTASRQPVSSATN.

The protein belongs to the GpsB family. As to quaternary structure, forms polymers through the coiled coil domains. Interacts with PBP1, MreC and EzrA.

The protein localises to the cytoplasm. Divisome component that associates with the complex late in its assembly, after the Z-ring is formed, and is dependent on DivIC and PBP2B for its recruitment to the divisome. Together with EzrA, is a key component of the system that regulates PBP1 localization during cell cycle progression. Its main role could be the removal of PBP1 from the cell pole after pole maturation is completed. Also contributes to the recruitment of PBP1 to the division complex. Not essential for septum formation. This is Cell cycle protein GpsB from Limosilactobacillus reuteri (strain DSM 20016) (Lactobacillus reuteri).